We begin with the raw amino-acid sequence, 1105 residues long: SWI/SNF complex subunit SMARCC1 (1105 aa).

Position 2 is an N-acetylalanine (Ala-2). The segment at 28 to 302 (LAVYRRKDGG…PVSFRQRIST (275 aa)) is marR-like, BRCT and chromo domains module. The 127-residue stretch at 38–164 (PATKFWESPE…IEKTLVQNNC (127 aa)) folds into the MarR-like domain. The 44-residue stretch at 168-211 (PNIYLIPDIDLKLANKLKDIIKRHQGTFTDEKSKASHHIYPYSS) folds into the BRCT; N-terminus domain. A Glycyl lysine isopeptide (Lys-Gly) (interchain with G-Cter in SUMO2) cross-link involves residue Lys-179. One can recognise a Chromo domain in the interval 217-245 (EWLRPVMRKEKQVLVHWGFYPDSYDTWVH). In terms of domain architecture, BRCT; C-terminus spans 261 to 285 (KPWKVHVKWILDTDIFNEWMNEEDY). The tract at residues 296–439 (FRQRISTKNE…DQSRSVDLGE (144 aa)) is disordered. Basic and acidic residues predominate over residues 302–318 (TKNEEPVRSPERRDRKA). Residues Ser-310, Ser-328, and Ser-330 each carry the phosphoserine modification. At Thr-335 the chain carries Phosphothreonine. An N6-acetyllysine mark is found at Lys-345 and Lys-346. Ser-350 is subject to Phosphoserine. Position 354 is an N6-acetyllysine (Lys-354). Position 357 is a phosphoserine (Ser-357). Residue Lys-359 is modified to N6-acetyllysine; alternate. Lys-359 is covalently cross-linked (Glycyl lysine isopeptide (Lys-Gly) (interchain with G-Cter in SUMO2); alternate). At Thr-398 the chain carries Phosphothreonine. One can recognise an SWIRM domain in the interval 449–546 (IIIPSYASWF…YQVDPESRPM (98 aa)). A Phosphoserine modification is found at Ser-573. Residue Lys-592 forms a Glycyl lysine isopeptide (Lys-Gly) (interchain with G-Cter in SUMO2) linkage. Residues 618–669 (SAGREWTEQETLLLLEALEMYKDDWNKVSEHVGSRTQDECILHFLRLPIEDP) form the SANT domain. A Glycyl lysine isopeptide (Lys-Gly) (interchain with G-Cter in SUMO2) cross-link involves residue Lys-739. The tract at residues 745-860 (ARASGKVDPT…DTGKKKVEHE (116 aa)) is disordered. Residues 776-785 (AEEEKMEADP) are compositionally biased toward acidic residues. Residues 789–860 (QPEKAENKVE…DTGKKKVEHE (72 aa)) are compositionally biased toward basic and acidic residues. A Glycyl lysine isopeptide (Lys-Gly) (interchain with G-Cter in SUMO2) cross-link involves residue Lys-796. Residues Ser-822 and Ser-825 each carry the phosphoserine modification. Residues Lys-829 and Lys-856 each participate in a glycyl lysine isopeptide (Lys-Gly) (interchain with G-Cter in SUMO2) cross-link. Positions 914 to 946 (FEELETIMDREKEALEQQRQQLLTERQNFHMEQ) form a coiled coil. Lys-948 bears the N6-acetyllysine mark. 2 disordered regions span residues 956–1028 (QQME…PGQH) and 1041–1105 (IHPS…SAAP). Low complexity predominate over residues 957–993 (QMEQQQHGQNPQQAHQHSGGPGLAPLGAAGHPGMMPH). Pro residues-rich tracts occupy residues 994–1017 (QQPP…PGQI) and 1048–1057 (PTPPGMPPMP). Arg-1064 bears the Asymmetric dimethylarginine mark. Residues 1073–1105 (MYPPPPQQQPPPPPPADGVPPPPAPGPPASAAP) are compositionally biased toward pro residues.

Belongs to the SMARCC family. As to quaternary structure, component of the multiprotein chromatin-remodeling complexes SWI/SNF: SWI/SNF-A (BAF), SWI/SNF-B (PBAF) and related complexes. The canonical complex contains a catalytic subunit (either SMARCA4/BRG1/BAF190A or SMARCA2/BRM/BAF190B) and at least SMARCE1, ACTL6A/BAF53, SMARCC1/BAF155, SMARCC2/BAF170, and SMARCB1/SNF5/BAF47. Other subunits specific to each of the complexes may also be present permitting several possible combinations developmentally and tissue specific. Component of the BAF complex, which includes at least actin (ACTB), ARID1A/BAF250A, ARID1B/BAF250B, SMARCA2/BRM, SMARCA4/BRG1, ACTL6A/BAF53, ACTL6B/BAF53B, SMARCE1/BAF57, SMARCC1/BAF155, SMARCC2/BAF170, SMARCB1/SNF5/INI1, and one or more SMARCD1/BAF60A, SMARCD2/BAF60B, or SMARCD3/BAF60C. In muscle cells, the BAF complex also contains DPF3. Component of neural progenitors-specific chromatin remodeling complex (npBAF complex) composed of at least, ARID1A/BAF250A or ARID1B/BAF250B, SMARCD1/BAF60A, SMARCD3/BAF60C, SMARCA2/BRM/BAF190B, SMARCA4/BRG1/BAF190A, SMARCB1/BAF47, SMARCC1/BAF155, SMARCE1/BAF57, SMARCC2/BAF170, PHF10/BAF45A, ACTL6A/BAF53A and actin. Component of neuron-specific chromatin remodeling complex (nBAF complex) composed of at least, ARID1A/BAF250A or ARID1B/BAF250B, SMARCD1/BAF60A, SMARCD3/BAF60C, SMARCA2/BRM/BAF190B, SMARCA4/BRG1/BAF190A, SMARCB1/BAF47, SMARCC1/BAF155, SMARCE1/BAF57, SMARCC2/BAF170, DPF1/BAF45B, DPF3/BAF45C, ACTL6B/BAF53B and actin. Component of the SWI/SNF-B (PBAF) chromatin remodeling complex, at least composed of SMARCA4/BRG1, SMARCB1/BAF47/SNF5, ACTL6A/BAF53A or ACTL6B/BAF53B, SMARCE1/BAF57, SMARCD1/BAF60A, SMARCD2/BAF60B, perhaps SMARCD3/BAF60C, SMARCC1/BAF155, SMARCC2/BAF170, PBRM1/BAF180, ARID2/BAF200 and actin. Component of SWI/SNF (GBAF) subcomplex, which includes at least BICRA or BICRAL (mutually exclusive), BRD9, SS18, SMARCA2/BRM, SMARCA4/BRG1/BAF190A, ACTL6A/BAF53, SMARCC1/BAF155, and SMARCD1/BAF60A. May also interact with the SIN3A histone deacetylase transcription repressor complex in conjunction with SMARCA2 and SMARCA4. The minimal complex composed of SMARCC1 and SMARCA4 seems to be able to associate with cyclin such as CCNE1 or transcription factors such as KLF1 or GATA1. Interacts with NR3C1 and SMARD1. Interacts with TRIP12; leading to disrupt interaction between TRIP12 and SMARCE1 and prevent SMARCE1 ubiquitination. Interacts with CEBPB (when not methylated). Interacts with KDM6B. Interacts with MKKS; the interaction takes place predominantly in the cytoplasm and may modulate SMARCC1 location. Interacts with DPF2. Interacts with PRDM1/BLIMP1. Interacts with DPF3a (isoform 2 of DPF3/BAF45C) and with HDGFL2 in a DPF3a-dependent manner. Post-translationally, phosphorylated on undefined residues at the G2/M transition by ERK1 and other kinases. This may contribute to cell cycle specific inactivation of remodeling complexes containing the phosphorylated protein. As to expression, expressed in brain, heart, muscle, placenta, lung, liver, muscle, kidney and pancreas.

The protein localises to the nucleus. It is found in the cytoplasm. Its function is as follows. Involved in transcriptional activation and repression of select genes by chromatin remodeling (alteration of DNA-nucleosome topology). Component of SWI/SNF chromatin remodeling complexes that carry out key enzymatic activities, changing chromatin structure by altering DNA-histone contacts within a nucleosome in an ATP-dependent manner. May stimulate the ATPase activity of the catalytic subunit of the complex. Belongs to the neural progenitors-specific chromatin remodeling complex (npBAF complex) and the neuron-specific chromatin remodeling complex (nBAF complex). During neural development a switch from a stem/progenitor to a postmitotic chromatin remodeling mechanism occurs as neurons exit the cell cycle and become committed to their adult state. The transition from proliferating neural stem/progenitor cells to postmitotic neurons requires a switch in subunit composition of the npBAF and nBAF complexes. As neural progenitors exit mitosis and differentiate into neurons, npBAF complexes which contain ACTL6A/BAF53A and PHF10/BAF45A, are exchanged for homologous alternative ACTL6B/BAF53B and DPF1/BAF45B or DPF3/BAF45C subunits in neuron-specific complexes (nBAF). The npBAF complex is essential for the self-renewal/proliferative capacity of the multipotent neural stem cells. The nBAF complex along with CREST plays a role regulating the activity of genes essential for dendrite growth. The chain is SWI/SNF complex subunit SMARCC1 from Homo sapiens (Human).